Consider the following 294-residue polypeptide: 4-hydroxy-tetrahydrodipicolinate synthase (294 aa).

Thr-46 is a binding site for pyruvate. The Proton donor/acceptor role is filled by Tyr-135. The active-site Schiff-base intermediate with substrate is Lys-164. Ile-205 is a binding site for pyruvate.

Belongs to the DapA family. In terms of assembly, homotetramer; dimer of dimers.

It is found in the cytoplasm. The catalysed reaction is L-aspartate 4-semialdehyde + pyruvate = (2S,4S)-4-hydroxy-2,3,4,5-tetrahydrodipicolinate + H2O + H(+). The protein operates within amino-acid biosynthesis; L-lysine biosynthesis via DAP pathway; (S)-tetrahydrodipicolinate from L-aspartate: step 3/4. Functionally, catalyzes the condensation of (S)-aspartate-beta-semialdehyde [(S)-ASA] and pyruvate to 4-hydroxy-tetrahydrodipicolinate (HTPA). This is 4-hydroxy-tetrahydrodipicolinate synthase from Nitratiruptor sp. (strain SB155-2).